A 388-amino-acid chain; its full sequence is MSEKFFEIFEKKLEKLKEQNLYRSVKDMESRHGMEITIQGKKYINFASNDYLGLSQHPLVKEAGIDAIKTFGAGGGASRLLSGGTILHRKLEELLSEFKNTESCLILNSGYTANTSLIPALAGENDIIFSDELNHASIIDGCRLSRAEKIIYKHADIEDLKKLIRNISCKGKKVIITDTVFSMDGDIAPIRELYELCKAEGALLYIDDAHGTGVLGNGYGILKHLGLQTEAFVIQMGTLSKAIGVFGAFVCGDSSIIDWFINSARGFIFSTSLPPSTVASAYASLKIIMEDKELIKRLWQNIEKVMEIIKNLELKTTKTQTPIIPILFENIEQAIKASRILYDSGIYAPVIRPPTVKTPRIRITITAGHSDNDIEKLSGALTLLNSIF.

Arg-23 contacts substrate. 110–111 contributes to the pyridoxal 5'-phosphate binding site; sequence GY. His-135 serves as a coordination point for substrate. Residues Ser-182, 207 to 210, and 238 to 241 each bind pyridoxal 5'-phosphate; these read DDAH and TLSK. Lys-241 bears the N6-(pyridoxal phosphate)lysine mark. Position 355 (Thr-355) interacts with substrate.

This sequence belongs to the class-II pyridoxal-phosphate-dependent aminotransferase family. BioF subfamily. In terms of assembly, homodimer. Pyridoxal 5'-phosphate is required as a cofactor.

It carries out the reaction 6-carboxyhexanoyl-[ACP] + L-alanine + H(+) = (8S)-8-amino-7-oxononanoate + holo-[ACP] + CO2. It functions in the pathway cofactor biosynthesis; biotin biosynthesis. Its function is as follows. Catalyzes the decarboxylative condensation of pimeloyl-[acyl-carrier protein] and L-alanine to produce 8-amino-7-oxononanoate (AON), [acyl-carrier protein], and carbon dioxide. The protein is Putative 8-amino-7-oxononanoate synthase (bioF) of Thermodesulfovibrio yellowstonii (strain ATCC 51303 / DSM 11347 / YP87).